We begin with the raw amino-acid sequence, 86 residues long: Large ribosomal subunit protein bL27 (86 aa).

Positions 1–26 (MATKKAGGSSRNGRDSAGRRLGIKKS) are disordered.

The protein belongs to the bacterial ribosomal protein bL27 family.

This chain is Large ribosomal subunit protein bL27, found in Rickettsia typhi (strain ATCC VR-144 / Wilmington).